Consider the following 1166-residue polypeptide: Serine/threonine-protein kinase BRI1-like 1 (1166 aa).

The first 21 residues, 1 to 21 (MKQRWLLVLILCFFTTSLVMG), serve as a signal peptide directing secretion. Residues 22–776 (IHGKHLINDD…IHAKKQTVAT (755 aa)) lie on the Extracellular side of the membrane. Asn33 carries N-linked (GlcNAc...) asparagine glycosylation. A Cys pair 1 motif is present at residues 66–73 (CSWRGVSC). 20 LRR repeats span residues 78 to 99 (RIVGLDLRNSGLTGTLNLVNLT), 103 to 124 (NLQNLYLQGNYFSSGGDSSGSD), 126 to 147 (YLQVLDLSSNSISDYSMVDYVF), 152 to 173 (NLVSVNISNNKLVGKLGFAPSS), 176 to 197 (SLTTVDLSYNILSDKIPESFIS), 202 to 224 (SLKYLDLTHNNLSGDFSDLSFGI), 227 to 248 (NLTFFSLSQNNLSGDKFPITLP), 252 to 274 (FLETLNISRNNLAGKIPNGEYWG), 278 to 300 (NLKQLSLAHNRLSGEIPPELSLL), 303 to 325 (TLVILDLSGNTFSGELPSQFTAC), 327 to 349 (WLQNLNLGNNYLSGDFLNTVVSK), 352 to 375 (GITYLYVAYNNISGSVPISLTNCS), 376 to 397 (NLRVLDLSSNGFTGNVPSGFCS), 403 to 424 (VLEKILIANNYLSGTVPMELGK), 427 to 449 (SLKTIDLSFNELTGPIPKEIWML), 451 to 473 (NLSDLVMWANNLTGTIPEGVCVK), 476 to 498 (NLETLILNNNLLTGSIPESISRC), 500 to 522 (NMIWISLSSNRLTGKIPSGIGNL), 524 to 547 (KLAILQLGNNSLSGNVPRQLGNCK), and 548 to 570 (SLIWLDLNSNNLTGDLPGELASQ). Asn97 carries N-linked (GlcNAc...) asparagine glycosylation. Residue Asn157 is glycosylated (N-linked (GlcNAc...) asparagine). 4 N-linked (GlcNAc...) asparagine glycosylation sites follow: Asn212, Asn227, Asn237, and Asn257. Asn362 and Asn373 each carry an N-linked (GlcNAc...) asparagine glycan. N-linked (GlcNAc...) asparagine glycosylation is found at Asn451 and Asn461. N-linked (GlcNAc...) asparagine glycosylation is found at Asn521, Asn532, Asn558, and Asn638. 3 LRR repeats span residues 664–686 (YLQVLNLGHNRITGTIPDSFGGL), 688–710 (AIGVLDLSHNNLQGYLPGSLGSL), and 712–734 (FLSDLDVSNNNLTGPIPFGGQLT). N-linked (GlcNAc...) asparagine glycans are attached at residues Asn722 and Asn743. A Cys pair 2 motif is present at residues 748–755 (CGVPLRPC). Residues 777–797 (AVIAGIAFSFMCFVMLVMALY) form a helical membrane-spanning segment. The Cytoplasmic portion of the chain corresponds to 798-1166 (RVRKVQKKEQ…LVEESRDKEP (369 aa)). Phosphothreonine is present on residues Thr848 and Thr856. Residues 859–1147 (FSAETMVGSG…KADTEEDESL (289 aa)) enclose the Protein kinase domain. ATP is bound by residues 865 to 873 (VGSGGFGEV) and Lys887. Tyr932 is modified (phosphotyrosine). The Proton acceptor role is filled by Asp987. Residue Ser1022 is modified to Phosphoserine. Tyr1030 carries the phosphotyrosine modification. Thr1141 carries the phosphothreonine modification. The interval 1142–1166 (EEDESLDEFSLKETPLVEESRDKEP) is disordered.

This sequence belongs to the protein kinase superfamily. Ser/Thr protein kinase family. In terms of tissue distribution, predominantly expressed in vascular tissues. From 7 day old seedlings, it is expressed in the columella cells of the root tip, in the vascular initials in the meristematic region of the root and in vascular tissues. After germination, it is expressed in the stele cell and in the early differentiation zone of the root, where the expression continues from the root to the hypocotyls and cotyledons following the midvein. In mature plants, it is expressed in the vasculature of the leaf, predominantly in the midvein, and in the vascular bundles of inflorescence stems. Localizes to procambial cells of the vascular bundles located between the differentiating xylem and the phloem.

It is found in the cell membrane. It carries out the reaction L-seryl-[protein] + ATP = O-phospho-L-seryl-[protein] + ADP + H(+). It catalyses the reaction L-threonyl-[protein] + ATP = O-phospho-L-threonyl-[protein] + ADP + H(+). Its function is as follows. Receptor with a serine/threonine-protein kinase activity. Regulates, in response to brassinosteroid binding, a signaling cascade involved in plant development. Binds brassinolide. May be involved in cell growth and vascular differentiation. This is Serine/threonine-protein kinase BRI1-like 1 (BRL1) from Arabidopsis thaliana (Mouse-ear cress).